We begin with the raw amino-acid sequence, 368 residues long: Glutamate 5-kinase (368 aa).

Lysine 9 serves as a coordination point for ATP. Substrate contacts are provided by serine 49, aspartate 136, and asparagine 148. ATP-binding positions include 168 to 169 (TD) and 210 to 216 (TGGMMTK). The PUA domain occupies 275-353 (AGIITIDDGA…ADIENVLGYE (79 aa)).

The protein belongs to the glutamate 5-kinase family.

Its subcellular location is the cytoplasm. It catalyses the reaction L-glutamate + ATP = L-glutamyl 5-phosphate + ADP. Its pathway is amino-acid biosynthesis; L-proline biosynthesis; L-glutamate 5-semialdehyde from L-glutamate: step 1/2. In terms of biological role, catalyzes the transfer of a phosphate group to glutamate to form L-glutamate 5-phosphate. The sequence is that of Glutamate 5-kinase from Haemophilus influenzae (strain 86-028NP).